The sequence spans 200 residues: Guanylyl cyclase-activating protein 2 (200 aa).

The N-myristoyl glycine moiety is linked to residue G2. 4 EF-hand domains span residues 14 to 31, 53 to 88, 89 to 124, and 141 to 176; these read GEID…FVME, EASQ…VLRG, TLEH…IYQL, and TPEE…DKWV. Ca(2+) is bound by residues D66, N68, D70, T72, E77, D102, D104, N106, C108, E113, D154, N156, D158, Q160, and E165.

The N-terminus is blocked. In terms of tissue distribution, in the retina, it is expressed in cone and rod photoreceptor cells.

Its subcellular location is the cell membrane. The protein localises to the photoreceptor inner segment. The protein resides in the cell projection. It is found in the cilium. It localises to the photoreceptor outer segment. Functionally, stimulates two retinal guanylyl cyclases (GCs) GUCY2D and GUCY2F when free calcium ions concentration is low, and inhibits GUCY2D and GUCY2F when free calcium ions concentration is elevated. This Ca(2+)-sensitive regulation of GCs is a key event in recovery of the dark state of rod photoreceptors following light exposure. May be involved in cone photoreceptor response and recovery of response in bright light. The protein is Guanylyl cyclase-activating protein 2 (GUCA1B) of Homo sapiens (Human).